We begin with the raw amino-acid sequence, 126 residues long: Small ribosomal subunit protein eS24 (126 aa).

Positions 98 to 126 (LYTKPQTSRKQRKEKKNRLKKAGKKTAKK) are disordered. Basic residues predominate over residues 104-126 (TSRKQRKEKKNRLKKAGKKTAKK).

The protein belongs to the eukaryotic ribosomal protein eS24 family.

This chain is Small ribosomal subunit protein eS24 (rps24), found in Dictyostelium discoideum (Social amoeba).